A 914-amino-acid polypeptide reads, in one-letter code: MGPFKSSVFILILHLLEGALSNSLIQLNNNGYEGIVVAIDPNVPEDETLIQQIKDMVTQASLYLLEATGKRFYFKNVAILIPETWKTKADYVRPKLETYKNADVLVAESTPPGNDEPYTEQMGNCGEKGERIHLTPDFIAGKKLAEYGPQGRAFVHEWAHLRWGVFDEYNNDEKFYLSNGRIQAVRCSAGITGTNVVKKCQGGSCYTKRCTFNKVTGLYEKGCEFVLQSRQTEKASIMFAQHVDSIVEFCTEQNHNKEAPNKQNQKCNLRSTWEVIRDSEDFKKTTPMTTQPPNPTFSLLQIGQRIVCLVLDKSGSMATGNRLNRLNQAGQLFLLQTVELGSWVGMVTFDSAAHVQNELIQINSGSDRDTLAKRLPAAASGGTSICSGLRSAFTVIRKKYPTDGSEIVLLTDGEDNTISGCFNEVKQSGAIIHTVALGPSAAQELEELSKMTGGLQTYASDQVQNNGLIDAFGALSSGNGAVSQRSIQLESKGLTLQNSQWMNGTVIVDSTVGKDTLFLITWTMQPPQILLWDPSGQKQGGFVVDKNTKMAYLQIPGIAKVGTWKYSLQASSQTLTLTVTSRASNATLPPITVTSKTNKDTSKFPSPLVVYANIRQGASPILRASVTALIESVNGKTVTLELLDNGAGADATKDDGVYSRYFTTYDTNGRYSVKVRALGGVNAARRRVIPQQSGALYIPGWIENDEIQWNPPRPEINKDDVQHKQVCFSRTSSGGSFVASDVPNAPIPDLFPPGQITDLKAEIHGGSLINLTWTAPGDDYDHGTAHKYIIRISTSILDLRDKFNESLQVNTTALIPKEANSEEVFLFKPENITFENGTDLFIAIQAVDKVDLKSEISNIARVSLFIPPQTPPETPSPDETSAPCPNIHINSTIPGIHILKIMWKWIGELQLSIA.

A signal peptide spans 1 to 21 (MGPFKSSVFILILHLLEGALS). The metalloprotease domain stretch occupies residues 46-199 (DETLIQQIKD…GITGTNVVKK (154 aa)). Zn(2+) is bound at residue His-156. Glu-157 is a catalytic residue. Zn(2+) is bound by residues His-160 and Asp-167. One can recognise a VWFA domain in the interval 306–475 (IVCLVLDKSG…NGLIDAFGAL (170 aa)). N-linked (GlcNAc...) asparagine glycosylation is found at Asn-503, Asn-585, Asn-770, Asn-804, Asn-810, Asn-831, Asn-836, and Asn-890.

This sequence belongs to the CLCR family. In terms of processing, glycosylated. Post-translationally, the 125-kDa product is autoproteolytically processed by the metalloprotease domain and yields to two cell-surface-associated subunits, a 90-kDa protein and a group of 37- to 41-kDa proteins. The cleavage is necessary for calcium-activated chloride channel (CaCC) activation activity. In terms of tissue distribution, highly expressed in small intestine and colon namely in intestinal basal crypt epithelia and goblet cells, and appendix. Weakly expressed in uterus, testis and kidney. Expressed in the airways epithelium of both asthmatic and healthy patients. Expressed in the bronchial epithelium, especially in mucus-producing goblet cells. Expressed in normal turbinate mucosa and nasal polyp. Expressed in.

It localises to the secreted. The protein resides in the extracellular space. Its subcellular location is the cell membrane. Its function is as follows. May be involved in mediating calcium-activated chloride conductance. May play critical roles in goblet cell metaplasia, mucus hypersecretion, cystic fibrosis and AHR. May be involved in the regulation of mucus production and/or secretion by goblet cells. Involved in the regulation of tissue inflammation in the innate immune response. May play a role as a tumor suppressor. Induces MUC5AC. The polypeptide is Calcium-activated chloride channel regulator 1 (CLCA1) (Homo sapiens (Human)).